Here is a 132-residue protein sequence, read N- to C-terminus: uncharacterized protein (132 aa).

The tract at residues 17 to 75 is disordered; the sequence is RSAVPRWPHLSSQSGVEPPDRWTGTPGWPSRDQEAPGSMMPPAAAQPSAHGALVPPATA. The segment covering 51–65 has biased composition (low complexity); the sequence is APGSMMPPAAAQPSA.

In terms of tissue distribution, expressed exclusively in heart.

It is found in the cytoplasm. This is an uncharacterized protein from Homo sapiens (Human).